Here is a 616-residue protein sequence, read N- to C-terminus: MPKYRSATTTHGRNMAGARALWRATGMTDADFGKPIIAVVNSFTQFVPGHVHLRDLGKLVAEQIEAAGGVAKEFNTIAVDDGIAMGHGGMLYSLPSRELIADSVEYMVNAHCADAMVCISNCDKITPGMLMASLRLNIPVIFVSGGPMEAGKTKLSDQIIKLDLVDAMIQGADPKVSDSQSDQVERSACPTCGSCSGMFTANSMNCLTEALGLSQPGNGSLLATHADRKQLFLNAGKRIVELTKRYYEQNDESALPRNIASKAAFENAMTLDIAMGGSTNTVLHLLAAAQEAEIDFTMSDIDKLSRKVPQLCKVAPSTQKYHMEDVHRAGGVIGILGELDRAGLLNRDVKNVLGLTLPQTLEQYDVMLTQDDAVKNMFRAGPAGIRTTQAFSQDCRWDSLDDDRANGCIRSLEHAYSKDGGLAVLYGNFAENGCIVKTAGVDDSILKFTGPAKVYESQDDAVEAILGGKVVAGDVVVIRYEGPKGGPGMQEMLYPTSFLKSMGLGKACALITDGRFSGGTSGLSIGHVSPEAASGGSIGLIEDGDLIAIDIPNRGIQLQVSDAELAARREAQEARGDKAWTPKNRERQVSFALRAYASLATSADKGAVRDKSKLGG.

Aspartate 81 lines the Mg(2+) pocket. Position 122 (cysteine 122) interacts with [2Fe-2S] cluster. Residues aspartate 123 and lysine 124 each coordinate Mg(2+). Lysine 124 carries the post-translational modification N6-carboxylysine. Cysteine 195 serves as a coordination point for [2Fe-2S] cluster. Glutamate 491 contacts Mg(2+). Serine 517 acts as the Proton acceptor in catalysis.

The protein belongs to the IlvD/Edd family. Homodimer. [2Fe-2S] cluster serves as cofactor. Requires Mg(2+) as cofactor.

It carries out the reaction (2R)-2,3-dihydroxy-3-methylbutanoate = 3-methyl-2-oxobutanoate + H2O. The catalysed reaction is (2R,3R)-2,3-dihydroxy-3-methylpentanoate = (S)-3-methyl-2-oxopentanoate + H2O. The protein operates within amino-acid biosynthesis; L-isoleucine biosynthesis; L-isoleucine from 2-oxobutanoate: step 3/4. Its pathway is amino-acid biosynthesis; L-valine biosynthesis; L-valine from pyruvate: step 3/4. Functionally, functions in the biosynthesis of branched-chain amino acids. Catalyzes the dehydration of (2R,3R)-2,3-dihydroxy-3-methylpentanoate (2,3-dihydroxy-3-methylvalerate) into 2-oxo-3-methylpentanoate (2-oxo-3-methylvalerate) and of (2R)-2,3-dihydroxy-3-methylbutanoate (2,3-dihydroxyisovalerate) into 2-oxo-3-methylbutanoate (2-oxoisovalerate), the penultimate precursor to L-isoleucine and L-valine, respectively. This chain is Dihydroxy-acid dehydratase, found in Escherichia coli O8 (strain IAI1).